The sequence spans 171 residues: uncharacterized protein (171 aa).

Disordered regions lie at residues 27 to 53 (DCPG…KMVL) and 82 to 108 (GHLE…PSSS). Residues 32–50 (GNNNREPSISTRGRTSSSK) are compositionally biased toward polar residues.

This is an uncharacterized protein from Homo sapiens (Human).